The following is a 38-amino-acid chain: Photosystem II reaction center protein X (38 aa).

Residues 8–28 form a helical membrane-spanning segment; sequence FLWSLVAGAVVLGALFGAIIF.

This sequence belongs to the PsbX family. Type 1 subfamily. As to quaternary structure, PSII is composed of 1 copy each of membrane proteins PsbA, PsbB, PsbC, PsbD, PsbE, PsbF, PsbH, PsbI, PsbJ, PsbK, PsbL, PsbM, PsbT, PsbX, PsbY, PsbZ, Psb30/Ycf12, peripheral proteins PsbO, CyanoQ (PsbQ), PsbU, PsbV and a large number of cofactors. It forms dimeric complexes.

Its subcellular location is the cellular thylakoid membrane. Its function is as follows. Involved in the binding and/or turnover of quinones at the Q(B) site of photosystem II (PSII). PSII is a light-driven water plastoquinone oxidoreductase, using light energy to abstract electrons from H(2)O, generating a proton gradient subsequently used for ATP formation. The protein is Photosystem II reaction center protein X of Synechococcus sp. (strain JA-2-3B'a(2-13)) (Cyanobacteria bacterium Yellowstone B-Prime).